The following is a 439-amino-acid chain: Histidine--tRNA ligase (439 aa).

It belongs to the class-II aminoacyl-tRNA synthetase family. In terms of assembly, homodimer.

The protein resides in the cytoplasm. It catalyses the reaction tRNA(His) + L-histidine + ATP = L-histidyl-tRNA(His) + AMP + diphosphate + H(+). In Clostridium tetani (strain Massachusetts / E88), this protein is Histidine--tRNA ligase.